Reading from the N-terminus, the 310-residue chain is Glucan endo-1,3-beta-glucosidase GI (310 aa).

E96 acts as the Proton donor in catalysis. Catalysis depends on E234, which acts as the Nucleophile.

It belongs to the glycosyl hydrolase 17 family. Monomer. Young leaves and roots.

It carries out the reaction Hydrolysis of (1-&gt;3)-beta-D-glucosidic linkages in (1-&gt;3)-beta-D-glucans.. Its function is as follows. May provide a degree of protection against microbial invasion of germinated barley grain through its ability to degrade fungal cell wall polysaccharides. Does not hydrolyze (1,3;1,4)-beta-D-glucans, (1,6)-beta-D-glucan, CM-cellulose, insoluble (1,3)-beta-D-glucans or aryl beta-D-glycosides. This Hordeum vulgare (Barley) protein is Glucan endo-1,3-beta-glucosidase GI.